The chain runs to 265 residues: Bidirectional sugar transporter NEC1 (265 aa).

Residues 1-8 (MAQLRADD) are Extracellular-facing. Residues 9 to 29 (LSFIFGLLGNIVSFMVFLAPV) traverse the membrane as a helical segment. One can recognise a MtN3/slv 1 domain in the interval 11–97 (FIFGLLGNIV…SLFLFYAPRK (87 aa)). The Cytoplasmic portion of the chain corresponds to 30 to 44 (PTFYKIYKRKSSEGY). A helical transmembrane segment spans residues 45–65 (QAIPYMVALFSAGLLLYYAYL). Residues 66–71 (RKNAYL) are Extracellular-facing. The helical transmembrane segment at 72–92 (IVSINGFGCAIELTYISLFLF) threads the bilayer. The Cytoplasmic segment spans residues 93–103 (YAPRKSKIFTG). Residues 104–124 (WLMLLELGALGMVMPITYLLA) form a helical membrane-spanning segment. The Extracellular portion of the chain corresponds to 125–130 (EGSHRV). The helical transmembrane segment at 131–151 (MIVGWICAAINVAVFAAPLSI) threads the bilayer. Residues 132–216 (IVGWICAAIN…LLYFVYKDSK (85 aa)) form the MtN3/slv 2 domain. The Cytoplasmic segment spans residues 152 to 164 (MRQVIKTKSVEFM). Residues 165–185 (PFTLSLFLTLCATMWFFYGFF) traverse the membrane as a helical segment. The Extracellular portion of the chain corresponds to 186–190 (KKDFY). The chain crosses the membrane as a helical span at residues 191 to 211 (IAFPNILGFLFGIVQMLLYFV). Residues 212 to 265 (YKDSKRIDDEKSDPVREATKSKEGVEIIINIEDDNSDNALQSMEKDFSRLRTSK) are Cytoplasmic-facing.

It belongs to the SWEET sugar transporter family. As to quaternary structure, forms homooligomers and/or heterooligomers. As to expression, highly expressed in nectary tissue and weakly in the stamen, especially in stomium cells and in the upper part of the filaments.

The protein resides in the cell membrane. In terms of biological role, mediates both low-affinity uptake and efflux of sugar across the plasma membrane. Promotes the formation of phloem bundles in mid-veins. Probably involved in the development of stomium cells that control anther opening time. Required for pollen viability. This is Bidirectional sugar transporter NEC1 (NEC1) from Petunia hybrida (Petunia).